Consider the following 374-residue polypeptide: MEISYYEILEITQSADKETIKKAYRKMALKYHPDRNQGDKEAEDKFKLVNEAYEVLSNDEKRAIYDRYGKDALKGGGFGSSSSGFGGFEDLGDIFSSFFGEGFGSSSRRRKSSNDEKIPSDFIVNLKLSFKEAVFGCKKNIDFTYKCSCKTCNGTGAKDGKLQTCPKCQGRGQVGVSQGFITFAQTCPDCQGSGEKASEKCSDCKGLGYNESKDSVELNIPEGIDTGMKLRVNAKGNILKNGTRGDMYVKIIAAEDDTFVRDDDDIYIEFPVFFTQAILGQSIKVPTIRGEATLNLPKGAKDGQRFVLEKEGVKDVHSSRIGNQIVQISIKFPTSLNDEQKELLEKLSESFGIKDGMHQEQKGLFEKIANWFKS.

The J domain occupies 4-69 (SYYEILEITQ…EKRAIYDRYG (66 aa)). A CR-type zinc finger spans residues 136–213 (GCKKNIDFTY…CKGLGYNESK (78 aa)). Cys149, Cys152, Cys165, Cys168, Cys187, Cys190, Cys201, and Cys204 together coordinate Zn(2+). CXXCXGXG motif repeat units lie at residues 149-156 (CKTCNGTG), 165-172 (CPKCQGRG), 187-194 (CPDCQGSG), and 201-208 (CSDCKGLG).

It belongs to the DnaJ family. As to quaternary structure, homodimer. Zn(2+) serves as cofactor.

Its subcellular location is the cytoplasm. Functionally, participates actively in the response to hyperosmotic and heat shock by preventing the aggregation of stress-denatured proteins and by disaggregating proteins, also in an autonomous, DnaK-independent fashion. Unfolded proteins bind initially to DnaJ; upon interaction with the DnaJ-bound protein, DnaK hydrolyzes its bound ATP, resulting in the formation of a stable complex. GrpE releases ADP from DnaK; ATP binding to DnaK triggers the release of the substrate protein, thus completing the reaction cycle. Several rounds of ATP-dependent interactions between DnaJ, DnaK and GrpE are required for fully efficient folding. Also involved, together with DnaK and GrpE, in the DNA replication of plasmids through activation of initiation proteins. In Campylobacter jejuni subsp. jejuni serotype O:6 (strain 81116 / NCTC 11828), this protein is Chaperone protein DnaJ.